We begin with the raw amino-acid sequence, 430 residues long: Nucleoporin NUP42 (430 aa).

Residues Met1 to Asn68 form a disordered region. The SXFG 1 repeat unit spans residues Ser2–Gly5. A compositionally biased stretch (polar residues) spans Asn15–Gly36. SAFGXPXFG repeat units lie at residues Ser38 to Gly46 and Ser58 to Gly66. Residues Phe45–Asn68 show a composition bias toward low complexity. The stretch at Ser78–Gly81 is one SXFG 2 repeat. SAFGXPXFG repeat units lie at residues Ser90–Gly98 and Ser112–Gly120. Positions Ser121 to Gly230 are interactions with CRM1 and GFD1. FG repeat units lie at residues Phe124 to Gly125 and Phe134 to Gly135. Residue Ser137 is modified to Phosphoserine. The SAFGXPXFG 5 repeat unit spans residues Ser143–Gly151. SXFG repeat units lie at residues Ser168 to Gly171 and Ser182 to Gly185. A disordered region spans residues Thr180–Gly294. Residues Ser186 to Ala201 are compositionally biased toward low complexity. Residues Ser200–Gly208 form an SAFGXPXFG 6 repeat. Residues Ala209 to Gly230 are compositionally biased toward polar residues. SXFG repeat units follow at residues Ser215–Gly218 and Ser232–Gly235. Polar residues-rich tracts occupy residues Phe237 to Ser252 and Pro260 to Gln285. 2 SXFG repeats span residues Ser259 to Gly262 and Ser277 to Gly280. Residues Phe296–Gly297 form an FG 3 repeat. Ser298 bears the Phosphoserine mark. The SXFG 9 repeat unit spans residues Ser312 to Gly315. 3 FG repeats span residues Phe319 to Gly322, Phe339 to Gly340, and Phe361 to Gly364. The tract at residues Phe319 to Thr346 is disordered. Polar residues predominate over residues Ile323 to Thr346. The tract at residues Gln365–Ala430 is interaction with GLE1.

Component of the nuclear pore complex (NPC). NPC constitutes the exclusive means of nucleocytoplasmic transport. NPCs allow the passive diffusion of ions and small molecules and the active, nuclear transport receptor-mediated bidirectional transport of macromolecules such as proteins, RNAs, ribonucleoparticles (RNPs), and ribosomal subunits across the nuclear envelope. Due to its 8-fold rotational symmetry, all subunits are present with 8 copies or multiples thereof. NUP42 interacts with the NUP82 subcomplex. It interacts directly with GLE1, and through its FG repeats with GFD1, the heterodimeric mRNA transport factor MEX67/MTR2, and the karyopherin CRM1.

It localises to the nucleus. The protein localises to the nuclear pore complex. It is found in the nucleus membrane. Its function is as follows. Functions as a component of the nuclear pore complex (NPC). NPC components, collectively referred to as nucleoporins (NUPs), can play the role of both NPC structural components and of docking or interaction partners for transiently associated nuclear transport factors. Active directional transport is assured by both, a Phe-Gly (FG) repeat affinity gradient for these transport factors across the NPC and a transport cofactor concentration gradient across the nuclear envelope (GSP1 and GSP2 GTPases associated predominantly with GTP in the nucleus, with GDP in the cytoplasm). NUP42 is specifically important for nuclear protein and mRNA export. The chain is Nucleoporin NUP42 (NUP42) from Saccharomyces cerevisiae (strain ATCC 204508 / S288c) (Baker's yeast).